Consider the following 343-residue polypeptide: N-acetyl-gamma-glutamyl-phosphate reductase (343 aa).

The active site involves cysteine 146.

It belongs to the NAGSA dehydrogenase family. Type 1 subfamily.

The protein localises to the cytoplasm. The enzyme catalyses N-acetyl-L-glutamate 5-semialdehyde + phosphate + NADP(+) = N-acetyl-L-glutamyl 5-phosphate + NADPH + H(+). It participates in amino-acid biosynthesis; L-arginine biosynthesis; N(2)-acetyl-L-ornithine from L-glutamate: step 3/4. In terms of biological role, catalyzes the NADPH-dependent reduction of N-acetyl-5-glutamyl phosphate to yield N-acetyl-L-glutamate 5-semialdehyde. In Pseudarthrobacter chlorophenolicus (strain ATCC 700700 / DSM 12829 / CIP 107037 / JCM 12360 / KCTC 9906 / NCIMB 13794 / A6) (Arthrobacter chlorophenolicus), this protein is N-acetyl-gamma-glutamyl-phosphate reductase.